Here is a 153-residue protein sequence, read N- to C-terminus: Probable inactive ribonuclease-like protein 13 (153 aa).

A signal peptide spans 1 to 22; that stretch reads MAPDVAWLLVLPLVFRPTLVTG.

The protein belongs to the pancreatic ribonuclease family.

The protein resides in the secreted. Does not exhibit any ribonuclease activity. The polypeptide is Probable inactive ribonuclease-like protein 13 (Rnase13) (Mus musculus (Mouse)).